The primary structure comprises 201 residues: Small ribosomal subunit protein uS4c (201 aa).

The S4 RNA-binding domain occupies 89–150 (MRLDNIVFRL…RQKSQAIITK (62 aa)).

It belongs to the universal ribosomal protein uS4 family. In terms of assembly, part of the 30S ribosomal subunit. Contacts protein S5. The interaction surface between S4 and S5 is involved in control of translational fidelity.

The protein localises to the plastid. It localises to the chloroplast. Its function is as follows. One of the primary rRNA binding proteins, it binds directly to 16S rRNA where it nucleates assembly of the body of the 30S subunit. With S5 and S12 plays an important role in translational accuracy. In Funaria hygrometrica (Moss), this protein is Small ribosomal subunit protein uS4c (rps4).